The chain runs to 240 residues: Sugar fermentation stimulation protein homolog (240 aa).

This sequence belongs to the SfsA family.

The protein is Sugar fermentation stimulation protein homolog of Saccharolobus islandicus (strain M.16.4 / Kamchatka #3) (Sulfolobus islandicus).